A 184-amino-acid chain; its full sequence is Large ribosomal subunit protein uL5 (184 aa).

Belongs to the universal ribosomal protein uL5 family. As to quaternary structure, part of the 50S ribosomal subunit; part of the 5S rRNA/L5/L18/L25 subcomplex. Contacts the 5S rRNA and the P site tRNA. Forms a bridge to the 30S subunit in the 70S ribosome.

Functionally, this is one of the proteins that bind and probably mediate the attachment of the 5S RNA into the large ribosomal subunit, where it forms part of the central protuberance. In the 70S ribosome it contacts protein S13 of the 30S subunit (bridge B1b), connecting the 2 subunits; this bridge is implicated in subunit movement. Contacts the P site tRNA; the 5S rRNA and some of its associated proteins might help stabilize positioning of ribosome-bound tRNAs. The chain is Large ribosomal subunit protein uL5 from Ureaplasma urealyticum serovar 10 (strain ATCC 33699 / Western).